The chain runs to 199 residues: 3-isopropylmalate dehydratase small subunit (199 aa).

The protein belongs to the LeuD family. LeuD type 1 subfamily. Heterodimer of LeuC and LeuD.

It carries out the reaction (2R,3S)-3-isopropylmalate = (2S)-2-isopropylmalate. The protein operates within amino-acid biosynthesis; L-leucine biosynthesis; L-leucine from 3-methyl-2-oxobutanoate: step 2/4. Functionally, catalyzes the isomerization between 2-isopropylmalate and 3-isopropylmalate, via the formation of 2-isopropylmaleate. This chain is 3-isopropylmalate dehydratase small subunit, found in Bacillus velezensis (strain DSM 23117 / BGSC 10A6 / LMG 26770 / FZB42) (Bacillus amyloliquefaciens subsp. plantarum).